Consider the following 438-residue polypeptide: Xaa-Pro dipeptidase 2 (438 aa).

Residues D242, D253, H333, E378, and E414 each contribute to the Mn(2+) site.

It belongs to the peptidase M24B family. Bacterial-type prolidase subfamily. Requires Mn(2+) as cofactor.

It carries out the reaction Xaa-L-Pro dipeptide + H2O = an L-alpha-amino acid + L-proline. In terms of biological role, splits dipeptides with a prolyl residue in the C-terminal position. This is Xaa-Pro dipeptidase 2 from Idiomarina loihiensis (strain ATCC BAA-735 / DSM 15497 / L2-TR).